The chain runs to 274 residues: Kit ligand (274 aa).

A signal peptide spans 1-25; sequence MKKTQTWIITCIYLQLLLFNPLVKT. Residues 26 to 215 are Extracellular-facing; the sequence is KGICENRVTD…SNFTGDSNLQ (190 aa). 2 cysteine pairs are disulfide-bonded: Cys29-Cys114 and Cys68-Cys164. N-linked (GlcNAc...) asparagine glycans are attached at residues Asn90, Asn97, Asn145, Asn196, and Asn207. The chain crosses the membrane as a helical span at residues 216–238; sequence WAAMALPAFFSLVIGFAFGALYW. The Cytoplasmic portion of the chain corresponds to 239–274; the sequence is KKKQPNLTRAVENIQINEEDNEISMLQEKEREFQEV.

It belongs to the SCF family. In terms of assembly, homodimer, non-covalently linked. Post-translationally, a soluble form is produced by proteolytic processing of the extracellular domain.

It localises to the cytoplasm. The protein localises to the cytoskeleton. The protein resides in the cell membrane. Its subcellular location is the cell projection. It is found in the lamellipodium. It localises to the filopodium. The protein localises to the secreted. In terms of biological role, stimulates the proliferation of mast cells. Able to augment the proliferation of both myeloid and lymphoid hematopoietic progenitors in bone marrow culture. Also mediates cell-cell adhesion. Acts synergistically with other cytokines, probably interleukins. The protein is Kit ligand (KITLG) of Equus caballus (Horse).